The sequence spans 131 residues: Ribonuclease P protein component (131 aa).

It belongs to the RnpA family. In terms of assembly, consists of a catalytic RNA component (M1 or rnpB) and a protein subunit.

The enzyme catalyses Endonucleolytic cleavage of RNA, removing 5'-extranucleotides from tRNA precursor.. RNaseP catalyzes the removal of the 5'-leader sequence from pre-tRNA to produce the mature 5'-terminus. It can also cleave other RNA substrates such as 4.5S RNA. The protein component plays an auxiliary but essential role in vivo by binding to the 5'-leader sequence and broadening the substrate specificity of the ribozyme. The polypeptide is Ribonuclease P protein component (Synechococcus sp. (strain WH7803)).